We begin with the raw amino-acid sequence, 298 residues long: N-acetylmuramic acid 6-phosphate etherase (298 aa).

Residues 55-218 form the SIS domain; sequence IHTQVSGGGR…STGLMIKSGK (164 aa). Catalysis depends on glutamate 83, which acts as the Proton donor. Residue glutamate 114 is part of the active site.

It belongs to the GCKR-like family. MurNAc-6-P etherase subfamily. Homodimer.

The catalysed reaction is N-acetyl-D-muramate 6-phosphate + H2O = N-acetyl-D-glucosamine 6-phosphate + (R)-lactate. It functions in the pathway amino-sugar metabolism; 1,6-anhydro-N-acetylmuramate degradation. It participates in amino-sugar metabolism; N-acetylmuramate degradation. The protein operates within cell wall biogenesis; peptidoglycan recycling. Functionally, specifically catalyzes the cleavage of the D-lactyl ether substituent of MurNAc 6-phosphate, producing GlcNAc 6-phosphate and D-lactate. Together with AnmK, is also required for the utilization of anhydro-N-acetylmuramic acid (anhMurNAc) either imported from the medium or derived from its own cell wall murein, and thus plays a role in cell wall recycling. This chain is N-acetylmuramic acid 6-phosphate etherase, found in Escherichia coli O6:K15:H31 (strain 536 / UPEC).